The sequence spans 428 residues: Protein Wnt-8b (428 aa).

Residues 1–22 form the signal peptide; the sequence is MFYTGSFWFIFFILPAIPFCHS. C54 and C65 are disulfide-bonded. N-linked (GlcNAc...) asparagine glycosylation is found at N123 and N176. 10 disulfides stabilise this stretch: C177–C185, C187–C205, C253–C267, C255–C262, C329–C367, C345–C360, C364–C406, C382–C397, C384–C394, and C389–C390. S259 carries the O-palmitoleoyl serine lipid modification. N332 carries N-linked (GlcNAc...) asparagine glycosylation.

The protein belongs to the Wnt family. In terms of processing, palmitoleoylation is required for efficient binding to frizzled receptors. Depalmitoleoylation leads to Wnt signaling pathway inhibition. Post-translationally, proteolytic processing by tiki1 and tiki2 promotes oxidation and formation of large disulfide-bond oligomers, leading to inactivation of wnt8b. As to expression, in adults, in brain.

It localises to the secreted. It is found in the extracellular space. Its subcellular location is the extracellular matrix. Its function is as follows. Ligand for members of the frizzled family of seven transmembrane receptors. Plays a role in the initiation of dorsal axis development. May activate a Nieuwkoop center-like signaling pathway. This chain is Protein Wnt-8b (wnt8b), found in Xenopus laevis (African clawed frog).